The sequence spans 128 residues: Ribonuclease P protein component 4 (128 aa).

4 residues coordinate Zn(2+): Cys-63, Cys-66, Cys-92, and Cys-95.

The protein belongs to the eukaryotic/archaeal RNase P protein component 4 family. In terms of assembly, consists of a catalytic RNA component and at least 4 protein subunits. Forms a subcomplex with Rnp1 which stimulates the catalytic RNA. The cofactor is Zn(2+).

The protein localises to the cytoplasm. The catalysed reaction is Endonucleolytic cleavage of RNA, removing 5'-extranucleotides from tRNA precursor.. Part of ribonuclease P, a protein complex that generates mature tRNA molecules by cleaving their 5'-ends. The sequence is that of Ribonuclease P protein component 4 from Methanocaldococcus jannaschii (strain ATCC 43067 / DSM 2661 / JAL-1 / JCM 10045 / NBRC 100440) (Methanococcus jannaschii).